Here is a 180-residue protein sequence, read N- to C-terminus: MDLINFIKICHLLYDRKYVVGSGGNVSIRDGNHIYITPTGSILGFLNEEDVCIVDLNGNIIKGKPTSELNMHLKIYQNKDCVNAIVHTHSMYCTAFSALDKKLELFTPEAEIVVKKIAYVDYSPCGSLELAENVSSCVEDSIILKNHGIVTVGKDITEAYVKTEVLEEIAQLNYIINNLK.

Substrate is bound by residues 24–25, 39–40, and 66–67; these read GN, TG, and TS. The Proton donor/acceptor role is filled by Glu68. Residues Glu68, His87, His89, and His147 each coordinate Zn(2+).

It belongs to the aldolase class II family. AraD/FucA subfamily. Homotetramer. It depends on Zn(2+) as a cofactor.

It carries out the reaction L-fuculose 1-phosphate = (S)-lactaldehyde + dihydroxyacetone phosphate. It functions in the pathway cofactor biosynthesis; coenzyme F420 biosynthesis. Functionally, involved in the biosynthesis of the coenzyme F420 which requires phospholactate produced via the aldol cleavage of L-fuculose 1-phosphate and the NAD(+)-dependent oxidation of (S)-lactaldehyde. Catalyzes the reversible cleavage of L-fuculose 1-phosphate (Fuc1P) to yield dihydroxyacetone phosphate (DHAP) and S-lactaldehyde. The chain is L-fuculose phosphate aldolase (fucA) from Methanococcus maripaludis (strain C7 / ATCC BAA-1331).